Consider the following 763-residue polypeptide: Protein translocase subunit SecA 2 (763 aa).

Residues Gln-83, Gly-101–Thr-105, and Asp-490 each bind ATP.

This sequence belongs to the SecA family. In terms of assembly, monomer and homodimer. Part of the essential Sec protein translocation apparatus which comprises SecA, SecYEG and auxiliary proteins SecDF. Other proteins may also be involved.

It localises to the cell membrane. It is found in the cytoplasm. The catalysed reaction is ATP + H2O + cellular proteinSide 1 = ADP + phosphate + cellular proteinSide 2.. Part of the Sec protein translocase complex. Interacts with the SecYEG preprotein conducting channel. Has a central role in coupling the hydrolysis of ATP to the transfer of proteins into and across the cell membrane, serving as an ATP-driven molecular motor driving the stepwise translocation of polypeptide chains across the membrane. The sequence is that of Protein translocase subunit SecA 2 from Corynebacterium efficiens (strain DSM 44549 / YS-314 / AJ 12310 / JCM 11189 / NBRC 100395).